We begin with the raw amino-acid sequence, 301 residues long: Tyrosine recombinase XerC (301 aa).

Positions 1–85 constitute a Core-binding (CB) domain; the sequence is MELISLFKQY…ALRSFYRFLV (85 aa). Positions 106–292 constitute a Tyr recombinase domain; it reads KLPHFFYEKE…TKEKLQESYR (187 aa). Catalysis depends on residues arginine 147, lysine 171, histidine 244, arginine 247, and histidine 270. Tyrosine 279 acts as the O-(3'-phospho-DNA)-tyrosine intermediate in catalysis.

The protein belongs to the 'phage' integrase family. XerC subfamily. In terms of assembly, forms a cyclic heterotetrameric complex composed of two molecules of XerC and two molecules of XerD.

The protein localises to the cytoplasm. Site-specific tyrosine recombinase, which acts by catalyzing the cutting and rejoining of the recombining DNA molecules. The XerC-XerD complex is essential to convert dimers of the bacterial chromosome into monomers to permit their segregation at cell division. It also contributes to the segregational stability of plasmids. The chain is Tyrosine recombinase XerC from Pediococcus pentosaceus (strain ATCC 25745 / CCUG 21536 / LMG 10740 / 183-1w).